The primary structure comprises 292 residues: uncharacterized protein (292 aa).

A helical membrane pass occupies residues 13-35 (LFILFIIVVCIYLLPRVAINAFY).

This sequence belongs to the serine esterase family.

The protein resides in the membrane. This is an uncharacterized protein from Salmonella typhimurium (strain LT2 / SGSC1412 / ATCC 700720).